The chain runs to 375 residues: Dual-specificity RNA methyltransferase RlmN (375 aa).

The active-site Proton acceptor is Glu-93. The region spanning 99–346 (ETNRGTLCVS…TTTRKTRGDD (248 aa)) is the Radical SAM core domain. The cysteines at positions 106 and 351 are disulfide-linked. The [4Fe-4S] cluster site is built by Cys-113, Cys-117, and Cys-120. S-adenosyl-L-methionine-binding positions include 177 to 178 (GE), Ser-209, 231 to 233 (SLH), and Asn-308. The active-site S-methylcysteine intermediate is Cys-351.

It belongs to the radical SAM superfamily. RlmN family. Requires [4Fe-4S] cluster as cofactor.

It is found in the cytoplasm. It carries out the reaction adenosine(2503) in 23S rRNA + 2 reduced [2Fe-2S]-[ferredoxin] + 2 S-adenosyl-L-methionine = 2-methyladenosine(2503) in 23S rRNA + 5'-deoxyadenosine + L-methionine + 2 oxidized [2Fe-2S]-[ferredoxin] + S-adenosyl-L-homocysteine. The catalysed reaction is adenosine(37) in tRNA + 2 reduced [2Fe-2S]-[ferredoxin] + 2 S-adenosyl-L-methionine = 2-methyladenosine(37) in tRNA + 5'-deoxyadenosine + L-methionine + 2 oxidized [2Fe-2S]-[ferredoxin] + S-adenosyl-L-homocysteine. Functionally, specifically methylates position 2 of adenine 2503 in 23S rRNA and position 2 of adenine 37 in tRNAs. m2A2503 modification seems to play a crucial role in the proofreading step occurring at the peptidyl transferase center and thus would serve to optimize ribosomal fidelity. The protein is Dual-specificity RNA methyltransferase RlmN of Azoarcus sp. (strain BH72).